Consider the following 538-residue polypeptide: Sensor protein CitS (538 aa).

Residues 1-13 (MKRRLFPLTFSAK) lie on the Cytoplasmic side of the membrane. The chain crosses the membrane as a helical span at residues 14–34 (MMGFIALLIIAMFVLLGVFLN). The Extracellular portion of the chain corresponds to 35 to 174 (EQYARTLEEQ…DIQQVIGERL (140 aa)). A helical transmembrane segment spans residues 175-195 (IAMWQIVVVIMILGLMGTWLV). The Cytoplasmic segment spans residues 196–538 (ANTVKKATLG…TIPKHEAKEG (343 aa)). One can recognise a PAS domain in the interval 216 to 282 (QQKEAILQSI…PEVLQVGKGQ (67 aa)). Residues 339-534 (AQTHEFSNKL…CFVLTIPKHE (196 aa)) enclose the Histidine kinase domain. Phosphohistidine; by autocatalysis is present on histidine 342.

The protein localises to the cell membrane. It catalyses the reaction ATP + protein L-histidine = ADP + protein N-phospho-L-histidine.. Functionally, member of the two-component regulatory system CitT/CitS. Functions probably as a membrane-associated protein kinase that phosphorylates CitT in response to environmental citrate or Mg(2+)-citrate complex. The polypeptide is Sensor protein CitS (citS) (Halalkalibacterium halodurans (strain ATCC BAA-125 / DSM 18197 / FERM 7344 / JCM 9153 / C-125) (Bacillus halodurans)).